Reading from the N-terminus, the 756-residue chain is Membrane-anchored protein 1 (756 aa).

An N-terminal signal peptide occupies residues 1–24 (MIRNTLAFLAILFLLIPTALLIIG). 2 N-linked (GlcNAc...) asparagine glycosylation sites follow: asparagine 52 and asparagine 64. 3 helical membrane passes run 91 to 111 (IISAFLSFLSAIFVFFSIFLV), 120 to 140 (IIVVFITTLLTCLAFAIELVL), and 148 to 168 (QSYVTAGAIGSDLIAILALCL). A glycan (N-linked (GlcNAc...) asparagine) is linked at asparagine 190. A disordered region spans residues 281 to 328 (YDEFRKSESSPSRSSVLSTSKPEVHETEGYCPHKTGNRPGFPSLNIPR). Over residues 289 to 300 (SSPSRSSVLSTS) the composition is skewed to low complexity. N-linked (GlcNAc...) asparagine glycosylation is found at asparagine 396 and asparagine 407. Residues 427–453 (EPPATRMPQTRSPVNDHSSFPSDLPIK) are disordered. The span at 433–447 (MPQTRSPVNDHSSFP) shows a compositional bias: polar residues. Serine 438 is subject to Phosphoserine. Asparagine 459, asparagine 470, asparagine 471, asparagine 496, asparagine 497, asparagine 521, asparagine 522, asparagine 547, asparagine 548, asparagine 573, asparagine 574, asparagine 594, asparagine 598, asparagine 599, asparagine 618, asparagine 623, asparagine 649, asparagine 664, asparagine 676, and asparagine 685 each carry an N-linked (GlcNAc...) asparagine glycan. Positions 482–650 (MLKNVGNGPR…MPTSPNSRNN (169 aa)) are disordered. A compositionally biased stretch (low complexity) spans 485–520 (NVGNGPRNAPRNNSSNNLHAQGGMPMNMRGPRGAPR). 3 stretches are compositionally biased toward polar residues: residues 593 to 605 (RNTSRNNSSSEFN), 617 to 629 (RNASRSNSSTDLF), and 640 to 650 (GMPTSPNSRNN). Residues 686-697 (GSRNPSHGSLNT) are compositionally biased toward polar residues. The disordered stretch occupies residues 686–713 (GSRNPSHGSLNTAHAGMGYGPRSMMRDP). The N-linked (GlcNAc...) asparagine glycan is linked to asparagine 715. Residues 735–756 (FELPVRGNRNNRRGPGGNRMIR) form a disordered region.

To yeast YOL019W and YMR063W.

It localises to the cell membrane. Its subcellular location is the cell tip. Its function is as follows. Required for correct cell separation at high temperatures. The protein is Membrane-anchored protein 1 (mac1) of Schizosaccharomyces pombe (strain 972 / ATCC 24843) (Fission yeast).